Consider the following 137-residue polypeptide: uncharacterized protein (137 aa).

A Sm domain is found at 30–105 (SLLCVFTALR…IRFIQIPDKI (76 aa)).

This is an uncharacterized protein from Dictyostelium discoideum (Social amoeba).